We begin with the raw amino-acid sequence, 1720 residues long: MDKQSASGEIPAMRWEPYHRRDPRNAKELSKTTSRGYFLDHLEDFDSQFFGISPKEAEQMDPQQRISLEVAWEALEDAGIPAKGLSGSDTAVFWGVNSDDYSKLVLEDLPNIEAWMGIGTAYCGIPNRISYHLNLMGPSTAVDAACASSLVAIHHGVQAIQLGESKIAIVGGVNALCGPGLTRVLDKAGAISSEGFCRSFDDEAKGYGRGEGAAAIILKNLSRAINDKDRILAVIKGSAVAQDGKTNGIMAPNAKAQQLVAQNALAVGNIDPLTVRYVEAHATSTPLGDPTEISAIAAVYGVGRDSQDPCFIGSIKPNIGHLEAGAGAMGFIKATLAIRKGILPPQANLNKLNSRIDWDKAGVKVVQEATKWPETDTIRRASICSYGYGGTVSHAVIEQFLPLSGLESLQTQSPDGPGVLLLSGPQQKRLSVQAETLRKWIAQDGRNHDLSSVLTTLATRRDHHDYRAAMVVESHDDAETALEALAKGADHPLVAQGRVLGTDIRKDVVWVFSGHGAQWTDMGKELLNNPVFYRAIQPLDELVQAEIGLSPIEMLLTGDFDSSDRVQILTYIMQIGISAVLKSNGVFPQAIIGHSVGEIAASVVAGALTPAEGALIVTRRAALYRRVMGQGGMILVNLPASQVEQELGQREDLVVAIESSPSSCVVAGDRDVVAQAAESFKERGVKTFTVKTDIAFHSPTLNGLIDPMLEALAEDLAPSTPTVRLFSTSLVDPRGQDLRDIHYWTNNMVNRVRLTSAVNAAVEEGYRIFLEVSSHPVVTHSINETLMDGGLEDFAVIPTLLRQKPTEKHILYSIAQLHCRGAEVDWKAQLPGPWADGLPTTTWMHKPIWRKIESAPLHTGLTHDVEKHTLLGQRIGIAGTNTTVYTTRLDNDTKPFPGSHPLHGTEIVPAAGLINTFMKGTGGRRLQNVVLRVPVAINAPRSVQVVVQEDQVKIMSRLLSDTPQATEDDSSWATHTTAYWARDIQEAVDPIDIAAVKKRLGTRIRDDFSINYLDQVGVSAMGFPWAITEHYHKDKEMIARVDVNPAVTGDAPLPWDSSSWAPILDAATSVGSTVFGTPALRMPAQIDRVDIFTSQDPPKIGWLYVEDASDAAPTSHVSVLNEAGEVVAKFTAMRFSEIEGTPGVSGSMESLVHQLAWPPATPAEEPLSIDTVLLVSSDAATMRQYANTIPRGVRSFEFSSVQDLISQDKSGLRLDKGTAVAYIPGEVQSLEEIPAASESFTWEVLELVKYIVKGGLPLKAFILTSNVGSGETPTALAQAPLFGLARIIASEHPDLGCLIDSENPVFPLTAMRYIQGADVIRINDDVARTARLRSLPRNKLHPASQPPRLLPRSEGTYLITGGLGVLGLETADFLVENGARRLILISRRALPPRRTWDAAPSDLQPTLAKIRNLESRGATVHILPLDISHPAAATQLSTALDTLSLPPVLGVVHAAGVLDNQLILETTRDAFTRVLAPKIAGALALHAVFPPNTLDFFLLFSSCGNLFGFPGQASYGAGNAFLDTLATHRARLGDAAVAVQWTSWRGMGMGASTEFINAELESKGITDVTRDEAFGAWLHLARYDIDHGVVLRSLAFDEGEPLPVSILTDIAVRRVGVAAAGDVPGTAAAGGADAIPSSGPELKVYLDEKIRGCVAKVLQMGAEDVDSKAALADLGVDSVMTVSLRRQLQQTLKVKVPSTLTWSHPTVSHLVGWFAEKVGK.

Residues 1-31 form a disordered region; the sequence is MDKQSASGEIPAMRWEPYHRRDPRNAKELSK. Residues 1 to 399 form the Ketosynthase family 3 (KS3) domain; the sequence is MDKQSASGEI…GTVSHAVIEQ (399 aa). Residues 16–30 show a composition bias toward basic and acidic residues; that stretch reads EPYHRRDPRNAKELS. Active-site for beta-ketoacyl synthase activity residues include cysteine 146, histidine 281, and histidine 321. Positions 509–823 are malonyl-CoA:ACP transacylase (MAT) domain; the sequence is VWVFSGHGAQ…IAQLHCRGAE (315 aa). The N-terminal hotdog fold stretch occupies residues 868 to 987; the sequence is HTLLGQRIGI…AYWARDIQEA (120 aa). Residues 868–1139 are dehydratase (DH) domain; it reads HTLLGQRIGI…FTAMRFSEIE (272 aa). The PKS/mFAS DH domain maps to 868-1144; the sequence is HTLLGQRIGI…FSEIEGTPGV (277 aa). The Proton acceptor; for dehydratase activity role is filled by histidine 900. A C-terminal hotdog fold region spans residues 1001-1144; it reads GTRIRDDFSI…FSEIEGTPGV (144 aa). Aspartate 1065 serves as the catalytic Proton donor; for dehydratase activity. Residues 1148–1545 form a product template (PT) domain region; the sequence is MESLVHQLAW…AVAVQWTSWR (398 aa). A Carrier domain is found at 1644-1718; that stretch reads VYLDEKIRGC…HLVGWFAEKV (75 aa). O-(pantetheine 4'-phosphoryl)serine is present on serine 1678.

It localises to the cytoplasm. Its subcellular location is the cytosol. The catalysed reaction is 3 malonyl-CoA + acetyl-CoA + NADPH + 3 H(+) = 6-methylsalicylate + 3 CO2 + NADP(+) + 4 CoA + H2O. The protein operates within mycotoxin biosynthesis; patulin biosynthesis. Functionally, 6-methylsalicylic acid synthase; part of the gene cluster that mediates the biosynthesis of patulin, an acetate-derived tetraketide mycotoxin produced by several fungal species that shows antimicrobial properties against several bacteria. PatK catalyzes the first step of the pathway which is the synthesis of 6-methylsalicylic acid via condensation of 1 acetate and 3 malonate units. The pathway begins with the synthesis of 6-methylsalicylic acid by the polyketide synthase (PKS) patK via condensation of acetate and malonate units. The 6-methylsalicylic acid decarboxylase patG then catalyzes the decarboxylation of 6-methylsalicylic acid to yield m-cresol (also known as 3-methylphenol). These first reactions occur in the cytosol. The intermediate m-cresol is then transported into the endoplasmic reticulum where the cytochrome P450 monooxygenase patH converts it to m-hydroxybenzyl alcohol, which is further converted to gentisyl alcohol by the cytochrome P450 monooxygenase patI. The oxidoreductases patJ and patO further convert gentisyl alcohol to isoepoxydon in the vacuole. PatN catalyzes then the transformation of isoepoxydon into phyllostine. The cluster protein patF is responsible for the conversion from phyllostine to neopatulin whereas the alcohol dehydrogenase patD converts neopatulin to E-ascladiol. The steps between isoepoxydon and E-ascladiol occur in the cytosol, and E-ascladiol is probably secreted to the extracellular space by one of the cluster-specific transporters patC or patM. Finally, the secreted patulin synthase patE catalyzes the conversion of E-ascladiol to patulin. In Aspergillus clavatus (strain ATCC 1007 / CBS 513.65 / DSM 816 / NCTC 3887 / NRRL 1 / QM 1276 / 107), this protein is 6-methylcalicylic acide synthase.